Reading from the N-terminus, the 348-residue chain is MSRLNLTMEVLLVAFVAVFLTSQVHSDEIPYEHLMSQLQACPKECNCPPNFPNAVYCDNKGLKSIPVIPPYTWYLYLQNNLIDVLSANALRNATQLKWINLNRNKITTEGLEVDALRAMSNLVHLYMEDNLLSSIPSPLPAKLEQLRLSRNKISKIPPGVFSGMGHLTLLDLQSNKLQDDAVTEVSLKGLNNLIQINLAKNQLNSMPLGLPPTTTQIFLDGNNIEKIPAEYFKGLPKVASLRLNRNKLANGGIPKNVFNLSSILDLQLSHNQLTEVPVISSGLEHLHLDHNKIKSVNSSDICPPGVLDDHLEEKSPRLRYLRLDGNEIQPPIPRELMTCFRLLRAVVI.

Positions 1-26 (MSRLNLTMEVLLVAFVAVFLTSQVHS) are cleaved as a signal peptide. Residues 40–69 (ACPKECNCPPNFPNAVYCDNKGLKSIPVIP) enclose the LRRNT domain. 2 cysteine pairs are disulfide-bonded: C41–C47 and C45–C57. LRR repeat units lie at residues 70-92 (PYTWYLYLQNNLIDVLSANALRN), 93-118 (ATQLKWINLNRNKITTEGLEVDALRA), 119-140 (MSNLVHLYMEDNLLSSIPSPLP), 141-163 (AKLEQLRLSRNKISKIPPGVFSG), 165-189 (GHLTLLDLQSNKLQDDAVTEVSLKG), 190-213 (LNNLIQINLAKNQLNSMPLGLPPT), 215-234 (TQIFLDGNNIEKIPAEYFKG), 235-260 (LPKVASLRLNRNKLANGGIPKNVFNL), 262-280 (SILDLQLSHNQLTEVPVIS), and 281-303 (SGLEHLHLDHNKIKSVNSSDICP). N92 is a glycosylation site (N-linked (GlcNAc...) (keratan sulfate) asparagine). A glycan (N-linked (GlcNAc...) (keratan sulfate) asparagine) is linked at N259. N297 carries an N-linked (GlcNAc...) asparagine glycan. The cysteines at positions 302 and 339 are disulfide-linked.

The protein belongs to the small leucine-rich proteoglycan (SLRP) family. SLRP class II subfamily. In terms of processing, glycosylated. Contains keratan sulfate chains. In terms of tissue distribution, expressed in eye, where it is found in the corneal epithelial layer and to a lesser extent in the stromal layer (at protein level).

The protein localises to the secreted. It is found in the extracellular space. Its subcellular location is the extracellular matrix. May be important in developing and maintaining corneal transparency and for the structure of the stromal matrix. The sequence is that of Keratocan from Danio rerio (Zebrafish).